The following is a 443-amino-acid chain: D(2) dopamine receptor (443 aa).

The Extracellular segment spans residues 1–37 (MDPLNLSWYDDDLESQNWSRPFNGSEGKPGKPHYNYY). N-linked (GlcNAc...) asparagine glycosylation is found at N5, N17, and N23. Residues 38–60 (AMLLTLLIFIIVFGNVLVCMAVS) traverse the membrane as a helical segment. The Cytoplasmic portion of the chain corresponds to 61–70 (REKALQTTTN). The chain crosses the membrane as a helical span at residues 71–93 (YLIVSLAVADLLVATLVMPWVVY). Residues 94–108 (LEVVGEWKFSRIHCD) lie on the Extracellular side of the membrane. C107 and C182 are oxidised to a cystine. A helical membrane pass occupies residues 109–130 (IFVTLDVMMCTASILNLCAISI). The Cytoplasmic segment spans residues 131–151 (DRYTAVAMPMLYNTRYSSKRR). Residues 152–172 (VTVMIAIVWVLSFTISCPLLF) traverse the membrane as a helical segment. Residues 173–188 (GLNNTDQNECIIANPA) are Extracellular-facing. Residues 189-213 (FVVYSSIVSFYVPFIVTLLVYIKIY) traverse the membrane as a helical segment. The segment at 211–373 (KIYIVLRRRR…SQQKEKKATQ (163 aa)) is interaction with PPP1R9B. Over 214–373 (IVLRRRRKRV…SQQKEKKATQ (160 aa)) the chain is Cytoplasmic. Residues 282-332 (EMLSSTSPPERTRYSPIPPSHHQLTLPDPSHHGLHSTADSPAKPEKNGHAK) form a disordered region. Positions 323–332 (AKPEKNGHAK) are enriched in basic and acidic residues. A helical transmembrane segment spans residues 374–395 (MLAIVLGVFIICWLPFFITHIL). Residues 396-409 (NIHCECNIPPVLYS) are Extracellular-facing. The cysteines at positions 399 and 401 are disulfide-linked. Residues 410–431 (AFTWLGYVNSAVNPIIYTTFNI) traverse the membrane as a helical segment. Over 432–443 (EFRKAFLKILHC) the chain is Cytoplasmic. C443 carries S-palmitoyl cysteine lipidation.

The protein belongs to the G-protein coupled receptor 1 family. As to quaternary structure, forms homo- and heterooligomers with DRD4. The interaction with DRD4 may modulate agonist-induced downstream signaling. Interacts with CADPS and CADPS2. Interacts with GPRASP1, PPP1R9B and CLIC6. Interacts with ARRB2. Interacts with HTR2A. Interacts with DRD1. Interacts with KCNA2. Palmitoylated. Palmitoylation which is required for proper localization to the plasma membrane and stability of the receptor could be carried on by ZDHHC4, ZDHHC3 and ZDHHC8.

The protein localises to the cell membrane. The protein resides in the golgi apparatus membrane. Dopamine receptor whose activity is mediated by G proteins which inhibit adenylyl cyclase. Positively regulates postnatal regression of retinal hyaloid vessels via suppression of VEGFR2/KDR activity, downstream of OPN5. This is D(2) dopamine receptor (DRD2) from Canis lupus familiaris (Dog).